The following is a 269-amino-acid chain: MDNALVRLTQVGVSFNGQAVLSDVDLAIEPGQIVTLIGPNGAGKTTLVRSVLGLLKPHVGEVWRRPRLTIGYMPQKLHVDATLPLSVLRFLRLVPGVKREQALAALREVGAAHVLERPLQSISGGELQRVLLARALLRKPELLVLDEPVQGVDVAGQAELYRLIGKLRDRYGCGVLMVSHDLHLVMSATDQVVCLNRHVCCSGHPEQVSGDPAFVELFGQDARSLAIYHHHHDHAHDLHGEVVKAGPGALPPGTRFTPVHKHGPDCNHG.

Residues 6 to 221 (VRLTQVGVSF…PAFVELFGQD (216 aa)) form the ABC transporter domain. Position 38–45 (38–45 (GPNGAGKT)) interacts with ATP.

It belongs to the ABC transporter superfamily. Zinc importer (TC 3.A.1.15.5) family. As to quaternary structure, the complex is composed of two ATP-binding proteins (ZnuC), two transmembrane proteins (ZnuB) and a solute-binding protein (ZnuA).

The protein resides in the cell inner membrane. The catalysed reaction is Zn(2+)(out) + ATP(in) + H2O(in) = Zn(2+)(in) + ADP(in) + phosphate(in) + H(+)(in). Its function is as follows. Part of the ABC transporter complex ZnuABC involved in zinc import. Responsible for energy coupling to the transport system. The polypeptide is Zinc import ATP-binding protein ZnuC (Pseudomonas aeruginosa (strain UCBPP-PA14)).